Reading from the N-terminus, the 417-residue chain is D-amino acid dehydrogenase (417 aa).

FAD is bound at residue 3-17 (IIVLGAGVIGVTSAY).

This sequence belongs to the DadA oxidoreductase family. It depends on FAD as a cofactor.

The enzyme catalyses a D-alpha-amino acid + A + H2O = a 2-oxocarboxylate + AH2 + NH4(+). It participates in amino-acid degradation; D-alanine degradation; NH(3) and pyruvate from D-alanine: step 1/1. In terms of biological role, oxidative deamination of D-amino acids. In Azorhizobium caulinodans (strain ATCC 43989 / DSM 5975 / JCM 20966 / LMG 6465 / NBRC 14845 / NCIMB 13405 / ORS 571), this protein is D-amino acid dehydrogenase.